The following is a 376-amino-acid chain: Lipoyl synthase, mitochondrial (376 aa).

7 residues coordinate [4Fe-4S] cluster: Cys103, Cys108, Cys114, Cys134, Cys138, Cys141, and Ser349. In terms of domain architecture, Radical SAM core spans 119 to 338 (EHGTQTATIM…EDRGNQLGFL (220 aa)).

The protein belongs to the radical SAM superfamily. Lipoyl synthase family. [4Fe-4S] cluster serves as cofactor.

The protein localises to the mitochondrion. The catalysed reaction is [[Fe-S] cluster scaffold protein carrying a second [4Fe-4S](2+) cluster] + N(6)-octanoyl-L-lysyl-[protein] + 2 oxidized [2Fe-2S]-[ferredoxin] + 2 S-adenosyl-L-methionine + 4 H(+) = [[Fe-S] cluster scaffold protein] + N(6)-[(R)-dihydrolipoyl]-L-lysyl-[protein] + 4 Fe(3+) + 2 hydrogen sulfide + 2 5'-deoxyadenosine + 2 L-methionine + 2 reduced [2Fe-2S]-[ferredoxin]. It participates in protein modification; protein lipoylation via endogenous pathway; protein N(6)-(lipoyl)lysine from octanoyl-[acyl-carrier-protein]: step 2/2. Its function is as follows. Catalyzes the radical-mediated insertion of two sulfur atoms into the C-6 and C-8 positions of the octanoyl moiety bound to the lipoyl domains of lipoate-dependent enzymes, thereby converting the octanoylated domains into lipoylated derivatives. This chain is Lipoyl synthase, mitochondrial, found in Drosophila ananassae (Fruit fly).